Consider the following 224-residue polypeptide: MWGSRIAVALRILVVLAILPVFLLLVYSLPFVRPVSTLMVKDYALLQGVNRQWVDIENIAPVLVNSVMMAEDGQFCSHGGVDWHQLGLVLDDAGDGGPSRGASTITMQMVKNLFLWNGRSYLRKGLEFPLALIADAVLSRKRIMEIYLNIAEWGPGIYGIEAAARHYFKRSAAKLTARQAALLAVTLPNPALRNPAKPTRNMQRIARIVAGRAMRSGPYVTCVK.

Residues 12–32 (ILVVLAILPVFLLLVYSLPFV) traverse the membrane as a helical segment.

This sequence belongs to the glycosyltransferase 51 family.

Its subcellular location is the cell inner membrane. The catalysed reaction is [GlcNAc-(1-&gt;4)-Mur2Ac(oyl-L-Ala-gamma-D-Glu-L-Lys-D-Ala-D-Ala)](n)-di-trans,octa-cis-undecaprenyl diphosphate + beta-D-GlcNAc-(1-&gt;4)-Mur2Ac(oyl-L-Ala-gamma-D-Glu-L-Lys-D-Ala-D-Ala)-di-trans,octa-cis-undecaprenyl diphosphate = [GlcNAc-(1-&gt;4)-Mur2Ac(oyl-L-Ala-gamma-D-Glu-L-Lys-D-Ala-D-Ala)](n+1)-di-trans,octa-cis-undecaprenyl diphosphate + di-trans,octa-cis-undecaprenyl diphosphate + H(+). It functions in the pathway cell wall biogenesis; peptidoglycan biosynthesis. Functionally, peptidoglycan polymerase that catalyzes glycan chain elongation from lipid-linked precursors. This Brucella melitensis biotype 1 (strain ATCC 23456 / CCUG 17765 / NCTC 10094 / 16M) protein is Biosynthetic peptidoglycan transglycosylase.